Here is a 346-residue protein sequence, read N- to C-terminus: Ribosomal RNA small subunit methyltransferase H (346 aa).

S-adenosyl-L-methionine is bound by residues glycine 46–tyrosine 48, aspartate 63, phenylalanine 90, aspartate 113, and glutamine 120. The interval glycine 270–aspartate 327 is disordered.

The protein belongs to the methyltransferase superfamily. RsmH family.

The protein localises to the cytoplasm. It carries out the reaction cytidine(1402) in 16S rRNA + S-adenosyl-L-methionine = N(4)-methylcytidine(1402) in 16S rRNA + S-adenosyl-L-homocysteine + H(+). Functionally, specifically methylates the N4 position of cytidine in position 1402 (C1402) of 16S rRNA. The sequence is that of Ribosomal RNA small subunit methyltransferase H from Brucella ovis (strain ATCC 25840 / 63/290 / NCTC 10512).